Consider the following 459-residue polypeptide: Phosphomethylpyrimidine synthase (459 aa).

Substrate is bound by residues N80, M109, Y139, H175, 195-197 (SRG), 236-239 (DSLR), and E275. H279 lines the Zn(2+) pocket. A substrate-binding site is contributed by Y302. H343 is a binding site for Zn(2+). The [4Fe-4S] cluster site is built by C423, C426, and C431.

This sequence belongs to the ThiC family. Requires [4Fe-4S] cluster as cofactor.

The catalysed reaction is 5-amino-1-(5-phospho-beta-D-ribosyl)imidazole + S-adenosyl-L-methionine = 4-amino-2-methyl-5-(phosphooxymethyl)pyrimidine + CO + 5'-deoxyadenosine + formate + L-methionine + 3 H(+). It participates in cofactor biosynthesis; thiamine diphosphate biosynthesis. Functionally, catalyzes the synthesis of the hydroxymethylpyrimidine phosphate (HMP-P) moiety of thiamine from aminoimidazole ribotide (AIR) in a radical S-adenosyl-L-methionine (SAM)-dependent reaction. The sequence is that of Phosphomethylpyrimidine synthase from Prochlorococcus marinus (strain MIT 9303).